The primary structure comprises 396 residues: Obg-like ATPase 1 (396 aa).

In terms of domain architecture, OBG-type G spans 23 to 283; it reads LKIGIVGLPN…LSAEERQKYL (261 aa). An ATP-binding site is contributed by 32 to 37; that stretch reads NVGKST. The Mg(2+) site is built by serine 36 and threonine 56. Leucine 231 contributes to the ATP binding site. Positions 267–274 match the Nuclear export signal motif; the sequence is LELKLQEL. N6-acetyllysine is present on lysine 294. One can recognise a TGS domain in the interval 304–387; it reads QLEYFFTAGP…EDGDIIFFKF (84 aa).

This sequence belongs to the TRAFAC class OBG-HflX-like GTPase superfamily. OBG GTPase family. YchF/OLA1 subfamily. As to quaternary structure, monomer. It depends on Mg(2+) as a cofactor.

It is found in the cytoplasm. The protein localises to the nucleus. It localises to the nucleolus. In terms of biological role, hydrolyzes ATP, and can also hydrolyze GTP with lower efficiency. Has lower affinity for GTP. The protein is Obg-like ATPase 1 of Pongo abelii (Sumatran orangutan).